The following is a 54-amino-acid chain: uncharacterized protein (54 aa).

This is an uncharacterized protein from Haemophilus influenzae (strain ATCC 51907 / DSM 11121 / KW20 / Rd).